Consider the following 600-residue polypeptide: Glutamine--fructose-6-phosphate aminotransferase [isomerizing] (600 aa).

The active-site Nucleophile; for GATase activity is the Cys-2. A Glutamine amidotransferase type-2 domain is found at 2 to 217; it reads CGIVGYIGQL…DKEMVIVTDD (216 aa). 2 SIS domains span residues 283–422 and 452–590; these read IAAA…KNGI and IARE…VDKP. Lys-595 (for Fru-6P isomerization activity) is an active-site residue.

In terms of assembly, homodimer.

It localises to the cytoplasm. The catalysed reaction is D-fructose 6-phosphate + L-glutamine = D-glucosamine 6-phosphate + L-glutamate. In terms of biological role, catalyzes the first step in hexosamine metabolism, converting fructose-6P into glucosamine-6P using glutamine as a nitrogen source. This is Glutamine--fructose-6-phosphate aminotransferase [isomerizing] (glmS) from Bacillus spizizenii (strain ATCC 23059 / NRRL B-14472 / W23) (Bacillus subtilis subsp. spizizenii).